A 264-amino-acid polypeptide reads, in one-letter code: Undecaprenyl-diphosphatase (264 aa).

8 consecutive transmembrane segments (helical) span residues 7–27 (VVILGFIQGIAEFLPISSSGH), 39–59 (LPIVFDIYLHLATVLVVMIYY), 89–109 (ILLILIITIITAFIGIFIEMF), 112–132 (LFTLNLVLINFIVTSILLFLL), 145–165 (ILLAGCLIGTMQGIGAMPGIS), 182–202 (SESFEISFLSLIPIVFGSLLL), 212–232 (MLFSIFEINLGAIIAFLVGLF), and 244–264 (SKLYYFSVYLIILVSLVYFLF).

The protein belongs to the UppP family.

It is found in the cell inner membrane. It carries out the reaction di-trans,octa-cis-undecaprenyl diphosphate + H2O = di-trans,octa-cis-undecaprenyl phosphate + phosphate + H(+). Its function is as follows. Catalyzes the dephosphorylation of undecaprenyl diphosphate (UPP). Confers resistance to bacitracin. The polypeptide is Undecaprenyl-diphosphatase (Borrelia hermsii (strain HS1 / DAH)).